A 149-amino-acid polypeptide reads, in one-letter code: Large ribosomal subunit protein uL15 (149 aa).

Basic residues-rich tracts occupy residues 1-14 (MPTR…HRGH) and 21-30 (RVGKHRKHPG). Residues 1 to 43 (MPTRFSKTRKHRGHVSAGKGRVGKHRKHPGGRGMAGGQHHHRT) form a disordered region.

This sequence belongs to the universal ribosomal protein uL15 family. As to quaternary structure, component of the large ribosomal subunit (LSU). Mature N.crassa ribosomes consist of a small (40S) and a large (60S) subunit. The 40S small subunit contains 1 molecule of ribosomal RNA (18S rRNA) and at least 32 different proteins. The large 60S subunit contains 3 rRNA molecules (26S, 5.8S and 5S rRNA) and at least 42 different proteins.

Its subcellular location is the cytoplasm. In terms of biological role, component of the ribosome, a large ribonucleoprotein complex responsible for the synthesis of proteins in the cell. The small ribosomal subunit (SSU) binds messenger RNAs (mRNAs) and translates the encoded message by selecting cognate aminoacyl-transfer RNA (tRNA) molecules. The large subunit (LSU) contains the ribosomal catalytic site termed the peptidyl transferase center (PTC), which catalyzes the formation of peptide bonds, thereby polymerizing the amino acids delivered by tRNAs into a polypeptide chain. The nascent polypeptides leave the ribosome through a tunnel in the LSU and interact with protein factors that function in enzymatic processing, targeting, and the membrane insertion of nascent chains at the exit of the ribosomal tunnel. This is Large ribosomal subunit protein uL15 (rpl-28) from Neurospora crassa (strain ATCC 24698 / 74-OR23-1A / CBS 708.71 / DSM 1257 / FGSC 987).